Reading from the N-terminus, the 554-residue chain is Eukaryotic translation initiation factor 3 subunit D-2 (554 aa).

The tract at residues 116–149 (RGNAAIGGGQGGAGGTGGAGVGNKYGKGRDMRRG) is disordered. The segment covering 120 to 140 (AIGGGQGGAGGTGGAGVGNKY) has biased composition (gly residues). The RNA gate stretch occupies residues 291 to 305 (QFDLLTVNETALEPP). Residues 532-554 (FDSDGNDDEETSDDRPFLKSLGN) form a disordered region.

This sequence belongs to the eIF-3 subunit D family. As to quaternary structure, component of the eukaryotic translation initiation factor 3 (eIF-3) complex. The eIF-3 complex interacts with pix.

The protein localises to the cytoplasm. Functionally, mRNA cap-binding component of the eukaryotic translation initiation factor 3 (eIF-3) complex, which is involved in protein synthesis of a specialized repertoire of mRNAs and, together with other initiation factors, stimulates binding of mRNA and methionyl-tRNAi to the 40S ribosome. The eIF-3 complex specifically targets and initiates translation of a subset of mRNAs involved in cell proliferation. In the eIF-3 complex, eif3d specifically recognizes and binds the 7-methylguanosine cap of a subset of mRNAs. This Drosophila virilis (Fruit fly) protein is Eukaryotic translation initiation factor 3 subunit D-2.